The following is a 164-amino-acid chain: MVKLTKRIGGLVLRLAAFGAALAALIVMITSRERASFLAISLEAKYTDMAAFKYFVIANAVVSVYSFLVLFLPKESLLWKFVVVLDLVMTMLLTSSLSAALAVAQVGKKGNANAGWLPICGQVPKFCDQITGALIAGFVALVLYVLLLLYSLHAVVDPFLLQKS.

Topologically, residues 1 to 7 (MVKLTKR) are cytoplasmic. A helical transmembrane segment spans residues 8–28 (IGGLVLRLAAFGAALAALIVM). The Extracellular portion of the chain corresponds to 29-51 (ITSRERASFLAISLEAKYTDMAA). A helical transmembrane segment spans residues 52 to 72 (FKYFVIANAVVSVYSFLVLFL). At 73 to 80 (PKESLLWK) the chain is on the cytoplasmic side. The helical transmembrane segment at 81–101 (FVVVLDLVMTMLLTSSLSAAL) threads the bilayer. Residues 102–129 (AVAQVGKKGNANAGWLPICGQVPKFCDQ) lie on the Extracellular side of the membrane. A helical transmembrane segment spans residues 130–150 (ITGALIAGFVALVLYVLLLLY). Residues 151 to 164 (SLHAVVDPFLLQKS) lie on the Cytoplasmic side of the membrane.

The protein belongs to the Casparian strip membrane proteins (CASP) family. In terms of assembly, homodimer and heterodimers. As to expression, expressed in the stele of the root.

The protein localises to the cell membrane. This Arabidopsis thaliana (Mouse-ear cress) protein is CASP-like protein 1C1.